A 221-amino-acid polypeptide reads, in one-letter code: Urease accessory protein UreE (221 aa).

A disordered region spans residues 160-194 (VPGTNKTTGDLAEEEQETERHEPHAHAIGEHHHEK). Residues 177–194 (TERHEPHAHAIGEHHHEK) show a composition bias toward basic and acidic residues.

Belongs to the UreE family.

It is found in the cytoplasm. Involved in urease metallocenter assembly. Binds nickel. Probably functions as a nickel donor during metallocenter assembly. The polypeptide is Urease accessory protein UreE (Bifidobacterium longum subsp. infantis (strain ATCC 15697 / DSM 20088 / JCM 1222 / NCTC 11817 / S12)).